Here is an 85-residue protein sequence, read N- to C-terminus: Large ribosomal subunit protein bL31B (85 aa).

It belongs to the bacterial ribosomal protein bL31 family. Type B subfamily. Part of the 50S ribosomal subunit.

This Serratia proteamaculans (strain 568) protein is Large ribosomal subunit protein bL31B.